The chain runs to 89 residues: Large ribosomal subunit protein bL27 (89 aa).

Residues 1-22 (MAHKKAGGSSRNGRDSESKRLG) are disordered.

The protein belongs to the bacterial ribosomal protein bL27 family.

The sequence is that of Large ribosomal subunit protein bL27 from Brucella abortus (strain S19).